Here is a 69-residue protein sequence, read N- to C-terminus: Large ribosomal subunit protein uL29 (69 aa).

The protein belongs to the universal ribosomal protein uL29 family.

This is Large ribosomal subunit protein uL29 from Oenococcus oeni (strain ATCC BAA-331 / PSU-1).